The sequence spans 446 residues: B3 domain-containing protein REM12 (446 aa).

The interval 1–46 (MVLNSSDLGPSRCDIRDLPAPSSTNDQGKTELARKKKVKRSNTEIE) is disordered. DNA-binding regions (TF-B3) lie at residues 56–153 (CFVA…FCST) and 193–289 (FMTL…VNTQ). The segment at 295–334 (SQQGECSRDSEKESSICAEPSRGNKKWKATNNRKERRDSS) is disordered. A DNA-binding region (TF-B3 3) is located at residues 341 to 435 (YVTLTLTPED…TTPVFKFCSN (95 aa)).

The protein resides in the nucleus. This Arabidopsis thaliana (Mouse-ear cress) protein is B3 domain-containing protein REM12 (REM12).